The following is a 284-amino-acid chain: NAD kinase (284 aa).

The Proton acceptor role is filled by Asp60. NAD(+) is bound by residues 60-61 (DG), 134-135 (ND), Lys145, Arg162, Asp164, and Gln235.

The protein belongs to the NAD kinase family. A divalent metal cation serves as cofactor.

It is found in the cytoplasm. The catalysed reaction is NAD(+) + ATP = ADP + NADP(+) + H(+). Involved in the regulation of the intracellular balance of NAD and NADP, and is a key enzyme in the biosynthesis of NADP. Catalyzes specifically the phosphorylation on 2'-hydroxyl of the adenosine moiety of NAD to yield NADP. The protein is NAD kinase of Treponema denticola (strain ATCC 35405 / DSM 14222 / CIP 103919 / JCM 8153 / KCTC 15104).